A 163-amino-acid polypeptide reads, in one-letter code: Probable cyclic pyranopterin monophosphate synthase (163 aa).

A disordered region spans residues 1–23 (MPDGDDDALTHTTADGDAQMVDV). Residues 80–82 (MCH) and 116–117 (ME) each bind substrate. Residue Asp-131 is part of the active site.

Belongs to the MoaC family. Homohexamer; trimer of dimers.

It carries out the reaction (8S)-3',8-cyclo-7,8-dihydroguanosine 5'-triphosphate = cyclic pyranopterin phosphate + diphosphate. Its pathway is cofactor biosynthesis; molybdopterin biosynthesis. In terms of biological role, catalyzes the conversion of (8S)-3',8-cyclo-7,8-dihydroguanosine 5'-triphosphate to cyclic pyranopterin monophosphate (cPMP). This Halobacterium salinarum (strain ATCC 29341 / DSM 671 / R1) protein is Probable cyclic pyranopterin monophosphate synthase.